The primary structure comprises 433 residues: Adenosylhomocysteinase A (433 aa).

Substrate contacts are provided by Thr57, Asp132, Glu157, Lys187, and Asp191. The NAD binding stretch occupies residues 184–351 (SVTKSKFDNL…EGRLVNLGCA (168 aa)).

This sequence belongs to the adenosylhomocysteinase family. As to quaternary structure, homotetramer. NAD(+) is required as a cofactor.

The protein resides in the cytoplasm. It carries out the reaction S-adenosyl-L-homocysteine + H2O = L-homocysteine + adenosine. It functions in the pathway amino-acid biosynthesis; L-homocysteine biosynthesis; L-homocysteine from S-adenosyl-L-homocysteine: step 1/1. Its function is as follows. Catalyzes the hydrolysis of S-adenosyl-L-homocysteine to form adenosine and homocysteine. Binds copper ions. The protein is Adenosylhomocysteinase A (ahcy-a) of Xenopus laevis (African clawed frog).